The sequence spans 405 residues: Sarcosine oxidase subunit beta (405 aa).

Residues Gly-31, His-32, Glu-53, Asn-61, Met-62, Thr-66, and Ile-68 each coordinate FAD. Tele-8alpha-FMN histidine is present on His-173. FAD is bound by residues Val-197, Gly-354, Gly-357, and Lys-359.

This sequence belongs to the SoxB family. In terms of assembly, heterotetramer composed of subunits alpha (SoxA), beta (SoxB), gamma (SoxG) and delta (SoxD). FAD serves as cofactor. It depends on FMN as a cofactor.

Its subcellular location is the cytoplasm. It carries out the reaction sarcosine + (6S)-5,6,7,8-tetrahydrofolate + O2 = (6R)-5,10-methylene-5,6,7,8-tetrahydrofolate + glycine + H2O2. It catalyses the reaction sarcosine + O2 + H2O = formaldehyde + glycine + H2O2. In terms of biological role, in the presence of tetrahydrofolate, catalyzes the oxidative demethylation of sarcosine to yield glycine, 5,10-methylenetetrahydrofolate and hydrogen peroxide. In the absence of tetrahydrofolate, catalyzes the oxidative demethylation of sarcosine to yield glycine, formaldehyde and hydrogen peroxide. This Arthrobacter sp protein is Sarcosine oxidase subunit beta (soxB).